We begin with the raw amino-acid sequence, 71 residues long: High-potential iron-sulfur protein (71 aa).

Q1 carries the pyrrolidone carboxylic acid modification. Residues C37, C40, C50, and C64 each contribute to the [4Fe-4S] cluster site.

It belongs to the high-potential iron-sulfur protein (HiPIP) family. Homodimer.

Functionally, specific class of high-redox-potential 4Fe-4S ferredoxins. Functions in anaerobic electron transport in most purple and in some other photosynthetic bacteria and in at least one genus (Paracoccus) of halophilic, denitrifying bacteria. This chain is High-potential iron-sulfur protein (hip), found in Halomonas halodenitrificans (strain ATCC 12084 / NCIMB 8669) (Paracoccus halodenitrificans).